Consider the following 185-residue polypeptide: NOP protein chaperone 1 (185 aa).

Residues 1 to 40 are disordered; that stretch reads MEVHGKPKASPSCSSPTRDSSGVPVSKELLTAGSDGRGGI. The segment covering 10-21 has biased composition (low complexity); that stretch reads SPSCSSPTRDSS. Ser34 and Ser66 each carry phosphoserine. The interval 118 to 185 is disordered; sequence FEMNQSDSKE…LDSPASKKKK (68 aa). Acidic residues predominate over residues 143–152; sequence SESEDEDDSI. Residue Ser178 is modified to Phosphoserine.

Interacts with NOP58, RUVBL1 and RUVBL2; the interactions are direct and NOPCHAP1 bridges the association of NOP58 with RUVBL1:RUVBL2 even in absence of snoRNAs. The interactions with RUVBL1 and RUVBL2 are disrupted upon ATP binding.

It is found in the nucleus. Client-loading PAQosome/R2TP complex cofactor that selects NOP58 to promote box C/D small nucleolar ribonucleoprotein (snoRNP) assembly. Acts as a bridge between NOP58 and the R2TP complex via RUVBL1:RUVBL2. The sequence is that of NOP protein chaperone 1 from Homo sapiens (Human).